The primary structure comprises 100 residues: Integration host factor subunit alpha (100 aa).

The tract at residues 54 to 73 (DLRDKRQRPGRNPKTGEEIP) is disordered.

This sequence belongs to the bacterial histone-like protein family. As to quaternary structure, heterodimer of an alpha and a beta chain.

Its function is as follows. This protein is one of the two subunits of integration host factor, a specific DNA-binding protein that functions in genetic recombination as well as in transcriptional and translational control. This chain is Integration host factor subunit alpha, found in Pseudomonas savastanoi pv. phaseolicola (strain 1448A / Race 6) (Pseudomonas syringae pv. phaseolicola (strain 1448A / Race 6)).